Here is a 155-residue protein sequence, read N- to C-terminus: Cathelicidin-1 (155 aa).

A signal peptide spans 1–29 (METPRASLSLGRWSLWLLLLGLALPSASA). Q30 bears the Pyrrolidone carboxylic acid mark. Residues 30–143 (QALSYREAVL…KQPWAPPQAA (114 aa)) constitute a propeptide that is removed on maturation. Cystine bridges form between C85–C96, C107–C124, and C146–C154.

It belongs to the cathelicidin family. In terms of tissue distribution, large granules of neutrophils.

It localises to the secreted. Its function is as follows. Potent microbicidal activity; active against S.aureus and E.coli. The chain is Cathelicidin-1 (CATHL1) from Bos taurus (Bovine).